The chain runs to 550 residues: Formate--tetrahydrofolate ligase (550 aa).

Position 62-69 (62-69 (TPAGEGKS)) interacts with ATP.

Belongs to the formate--tetrahydrofolate ligase family.

It carries out the reaction (6S)-5,6,7,8-tetrahydrofolate + formate + ATP = (6R)-10-formyltetrahydrofolate + ADP + phosphate. The protein operates within one-carbon metabolism; tetrahydrofolate interconversion. In Corynebacterium diphtheriae (strain ATCC 700971 / NCTC 13129 / Biotype gravis), this protein is Formate--tetrahydrofolate ligase.